Consider the following 341-residue polypeptide: Tetraacyldisaccharide 4'-kinase (341 aa).

54–61 (TVGGTGKT) provides a ligand contact to ATP.

Belongs to the LpxK family.

It catalyses the reaction a lipid A disaccharide + ATP = a lipid IVA + ADP + H(+). It functions in the pathway glycolipid biosynthesis; lipid IV(A) biosynthesis; lipid IV(A) from (3R)-3-hydroxytetradecanoyl-[acyl-carrier-protein] and UDP-N-acetyl-alpha-D-glucosamine: step 6/6. Transfers the gamma-phosphate of ATP to the 4'-position of a tetraacyldisaccharide 1-phosphate intermediate (termed DS-1-P) to form tetraacyldisaccharide 1,4'-bis-phosphate (lipid IVA). The protein is Tetraacyldisaccharide 4'-kinase of Mesorhizobium japonicum (strain LMG 29417 / CECT 9101 / MAFF 303099) (Mesorhizobium loti (strain MAFF 303099)).